We begin with the raw amino-acid sequence, 290 residues long: Endoplasmic reticulum-Golgi intermediate compartment protein 1 (290 aa).

Over 1–26 (MPFDFRRFDIYRKVPKDLTQPTYTGA) the chain is Cytoplasmic. Residues 27 to 47 (IISICCCLFITFLFLSELTGF) form a helical membrane-spanning segment. Topologically, residues 48–254 (IANEIVNELY…RRQPMYRFIT (207 aa)) are lumenal. The N-linked (GlcNAc...) asparagine glycan is linked to N74. A helical membrane pass occupies residues 255–275 (TVCAIIGGTFTVAGILDSFIF). Over 276–290 (TASEAWKKIQLGKMQ) the chain is Cytoplasmic.

It belongs to the ERGIC family.

It is found in the endoplasmic reticulum membrane. Its subcellular location is the endoplasmic reticulum-Golgi intermediate compartment membrane. It localises to the golgi apparatus membrane. Functionally, possible role in transport between endoplasmic reticulum and Golgi. The chain is Endoplasmic reticulum-Golgi intermediate compartment protein 1 (ergic1) from Xenopus laevis (African clawed frog).